The sequence spans 321 residues: Aspartate carbamoyltransferase catalytic subunit (321 aa).

Residues R57 and T58 each contribute to the carbamoyl phosphate site. Residue K85 coordinates L-aspartate. Residues R107, H142, and Q145 each coordinate carbamoyl phosphate. Residues R175 and R229 each contribute to the L-aspartate site. 2 residues coordinate carbamoyl phosphate: G270 and P271.

It belongs to the aspartate/ornithine carbamoyltransferase superfamily. ATCase family. In terms of assembly, heterododecamer (2C3:3R2) of six catalytic PyrB chains organized as two trimers (C3), and six regulatory PyrI chains organized as three dimers (R2).

The enzyme catalyses carbamoyl phosphate + L-aspartate = N-carbamoyl-L-aspartate + phosphate + H(+). It functions in the pathway pyrimidine metabolism; UMP biosynthesis via de novo pathway; (S)-dihydroorotate from bicarbonate: step 2/3. Catalyzes the condensation of carbamoyl phosphate and aspartate to form carbamoyl aspartate and inorganic phosphate, the committed step in the de novo pyrimidine nucleotide biosynthesis pathway. In Mycobacterium leprae (strain TN), this protein is Aspartate carbamoyltransferase catalytic subunit.